The primary structure comprises 724 residues: Outer spore wall protein 2 (724 aa).

2 disordered regions span residues 407-427 and 477-497; these read NSGQ…KNRV and TSGG…YDDK.

The protein localises to the cytoplasm. It localises to the prospore membrane. May be involved in a late step of spore wall assembly. This chain is Outer spore wall protein 2 (OSW2), found in Saccharomyces cerevisiae (strain ATCC 204508 / S288c) (Baker's yeast).